The chain runs to 593 residues: High affinity cGMP-specific 3',5'-cyclic phosphodiesterase 9A (593 aa).

Residues Ser87 to Gly142 form a disordered region. Basic and acidic residues predominate over residues Arg104 to Ala122. The PDEase domain occupies Pro236 to Asp557. His312 (proton donor) is an active-site residue. Position 312-316 (His312–His316) interacts with 3',5'-cyclic GMP. Zn(2+) is bound by residues His316, His352, and Asp353. Residue Asp353 participates in 3',5'-cyclic GMP binding. Residue Asp353 coordinates Mg(2+). Ser379 is subject to Phosphoserine. 3',5'-cyclic GMP contacts are provided by residues Asp462, Tyr484, and Ala512 to Gln513. Residue Asp462 coordinates Zn(2+). A disordered region spans residues Gln564–Ala593. A compositionally biased stretch (basic and acidic residues) spans Glu576–Ala593.

The protein belongs to the cyclic nucleotide phosphodiesterase family. PDE9 subfamily. Homodimer. Zn(2+) serves as cofactor. Mg(2+) is required as a cofactor.

It localises to the cell projection. The protein localises to the ruffle membrane. The protein resides in the cytoplasm. Its subcellular location is the perinuclear region. It is found in the golgi apparatus. It localises to the endoplasmic reticulum. The protein localises to the cell membrane. The protein resides in the sarcolemma. It catalyses the reaction 3',5'-cyclic GMP + H2O = GMP + H(+). The protein operates within purine metabolism; 3',5'-cyclic GMP degradation; GMP from 3',5'-cyclic GMP: step 1/1. With respect to regulation, specifically inhibited by a compound named 3r ((R)-2-((1-cyclopentyl-4-hydroxy-1H-pyrazolo[3,4-d]pyrimidin-6- yl)amino)-N-(4-methoxyphenyl)propanamide); the inhibitor forms a hydrogen bond with Tyr-484, Ala-512 and Gln-513. Functionally, specifically hydrolyzes the second messenger cGMP, which is a key regulator of many important physiological processes. Highly specific: compared to other members of the cyclic nucleotide phosphodiesterase family, has the highest affinity and selectivity for cGMP. Specifically regulates natriuretic-peptide-dependent cGMP signaling in heart, acting as a regulator of cardiac hypertrophy in myocytes and muscle. Does not regulate nitric oxide-dependent cGMP in heart. Additional experiments are required to confirm whether its ability to hydrolyze natriuretic-peptide-dependent cGMP is specific to heart or is a general feature of the protein. In brain, involved in cognitive function, such as learning and long-term memory. The polypeptide is High affinity cGMP-specific 3',5'-cyclic phosphodiesterase 9A (PDE9A) (Pan troglodytes (Chimpanzee)).